Here is a 473-residue protein sequence, read N- to C-terminus: GTPase Der (473 aa).

2 consecutive EngA-type G domains span residues 3 to 167 (FTVA…GKDR) and 203 to 378 (LRVA…RVWN). Residues 9–16 (GRPNVGKS), 56–60 (DTAGL), 119–122 (NKSE), 209–216 (GRPNAGKS), 256–260 (DTAGM), and 321–324 (NKWD) each bind GTP. One can recognise a KH-like domain in the interval 379–463 (KRISTARLNR…PIRIHFRSAE (85 aa)).

This sequence belongs to the TRAFAC class TrmE-Era-EngA-EngB-Septin-like GTPase superfamily. EngA (Der) GTPase family. Associates with the 50S ribosomal subunit.

Functionally, GTPase that plays an essential role in the late steps of ribosome biogenesis. The sequence is that of GTPase Der from Rhizobium etli (strain CIAT 652).